We begin with the raw amino-acid sequence, 205 residues long: Large ribosomal subunit protein uL3 (205 aa).

The segment at 126–150 is disordered; that stretch reads GGPKTHGQSDRHRAPGSISSTTTPG.

Belongs to the universal ribosomal protein uL3 family. As to quaternary structure, part of the 50S ribosomal subunit. Forms a cluster with proteins L14 and L19.

One of the primary rRNA binding proteins, it binds directly near the 3'-end of the 23S rRNA, where it nucleates assembly of the 50S subunit. This Dehalococcoides mccartyi (strain ATCC BAA-2266 / KCTC 15142 / 195) (Dehalococcoides ethenogenes (strain 195)) protein is Large ribosomal subunit protein uL3.